A 423-amino-acid polypeptide reads, in one-letter code: Gamma-glutamyl phosphate reductase (423 aa).

Belongs to the gamma-glutamyl phosphate reductase family.

The protein localises to the cytoplasm. The catalysed reaction is L-glutamate 5-semialdehyde + phosphate + NADP(+) = L-glutamyl 5-phosphate + NADPH + H(+). It participates in amino-acid biosynthesis; L-proline biosynthesis; L-glutamate 5-semialdehyde from L-glutamate: step 2/2. Functionally, catalyzes the NADPH-dependent reduction of L-glutamate 5-phosphate into L-glutamate 5-semialdehyde and phosphate. The product spontaneously undergoes cyclization to form 1-pyrroline-5-carboxylate. This is Gamma-glutamyl phosphate reductase from Desulfovibrio desulfuricans (strain ATCC 27774 / DSM 6949 / MB).